The chain runs to 529 residues: MASFVDRVVLHVSGGTGGHGCVSVHREKFKPLGGPDGGNGGNGGDVILRVDHQTTTLLDYHHAPHRHATNGGPGMGDWRGGKNGETLVLPVPDGTVVKSKDGTVLADLVGEGTEYIAAAGGPGGLGNAALSSQKRRAPGFALLGIEGESSDIVLELKSIADIALVGFPSAGKSSLIAAMSAARPKIADYPFTTLIPNLGVVQAGDVRFTIADVPGLIEGASEGKGLGHNFLRHVERCAALVHVLDCGTLESDRDPLSDLSIIETELEKYAVDMSYAGQDGEVVPLNHRPRLVALNKVDLPDGKDMAEFVRPELESRGYRVFEVSATSHEGLRQLGFAMAEIVKAARDAVEAAPPKVTPTVLRPRAVNETGFRIRREEKAHEPLFRVLGDKPVRWVKQTDFTNEEAIGYLADRLARLGVETELFKMGAKPGDTVVIGEDDGVVFDWEPTMMAGAELLASPRGTDIRFADTGDRPTRSQKREEQQERRDAKAAARAELEAERKAGIWTESVSGRRAAQPIKESGLDSGDES.

The Obg domain occupies 2 to 159; sequence ASFVDRVVLH…SDIVLELKSI (158 aa). The region spanning 160-343 is the OBG-type G domain; it reads ADIALVGFPS…LGFAMAEIVK (184 aa). Residues 166–173, 191–195, 212–215, 295–298, and 324–326 each bind GTP; these read GFPSAGKS, FTTLI, DVPG, NKVD, and SAT. The Mg(2+) site is built by serine 173 and threonine 193. An OCT domain is found at 363 to 447; that stretch reads PRAVNETGFR…DDGVVFDWEP (85 aa). The segment at 461–529 is disordered; it reads GTDIRFADTG…ESGLDSGDES (69 aa). The span at 462-502 shows a compositional bias: basic and acidic residues; it reads TDIRFADTGDRPTRSQKREEQQERRDAKAAARAELEAERKA.

It belongs to the TRAFAC class OBG-HflX-like GTPase superfamily. OBG GTPase family. In terms of assembly, monomer. Mg(2+) serves as cofactor.

It is found in the cytoplasm. Its function is as follows. An essential GTPase which binds GTP, GDP and possibly (p)ppGpp with moderate affinity, with high nucleotide exchange rates and a fairly low GTP hydrolysis rate. Plays a role in control of the cell cycle, stress response, ribosome biogenesis and in those bacteria that undergo differentiation, in morphogenesis control. This chain is GTPase Obg, found in Pseudarthrobacter chlorophenolicus (strain ATCC 700700 / DSM 12829 / CIP 107037 / JCM 12360 / KCTC 9906 / NCIMB 13794 / A6) (Arthrobacter chlorophenolicus).